The sequence spans 354 residues: tRNase Z TRZ2, chloroplastic (354 aa).

The segment at 1-21 (MQLSSSFPISPPKIFPSTKHH) is disordered. The N-terminal 68 residues, 1 to 68 (MQLSSSFPIS…EEEEEYRKAR (68 aa)), are a transit peptide targeting the chloroplast.

It belongs to the RNase Z family. In terms of assembly, homodimer. Requires Zn(2+) as cofactor. Ca(2+) serves as cofactor. It depends on Mn(2+) as a cofactor. The cofactor is Mg(2+). Highly expressed in green and actively dividing tissues.

Its subcellular location is the plastid. It is found in the chloroplast. It carries out the reaction Endonucleolytic cleavage of RNA, removing extra 3' nucleotides from tRNA precursor, generating 3' termini of tRNAs. A 3'-hydroxy group is left at the tRNA terminus and a 5'-phosphoryl group is left at the trailer molecule.. Functionally, zinc phosphodiesterase, which displays tRNA 3'-processing endonuclease activity. Involved in tRNA maturation, by removing a 3'-trailer from precursor tRNA. In Arabidopsis thaliana (Mouse-ear cress), this protein is tRNase Z TRZ2, chloroplastic.